The chain runs to 380 residues: Erythronate-4-phosphate dehydrogenase (380 aa).

Substrate is bound by residues Ser45 and Thr66. Residues Asp146, Thr174, 205–207 (ASR), and Asp231 contribute to the NAD(+) site. Arg207 is an active-site residue. Glu236 is an active-site residue. His253 (proton donor) is an active-site residue. An NAD(+)-binding site is contributed by Gly256. Residue Tyr257 coordinates substrate.

Belongs to the D-isomer specific 2-hydroxyacid dehydrogenase family. PdxB subfamily. As to quaternary structure, homodimer.

The protein localises to the cytoplasm. The enzyme catalyses 4-phospho-D-erythronate + NAD(+) = (R)-3-hydroxy-2-oxo-4-phosphooxybutanoate + NADH + H(+). It functions in the pathway cofactor biosynthesis; pyridoxine 5'-phosphate biosynthesis; pyridoxine 5'-phosphate from D-erythrose 4-phosphate: step 2/5. Catalyzes the oxidation of erythronate-4-phosphate to 3-hydroxy-2-oxo-4-phosphonooxybutanoate. This chain is Erythronate-4-phosphate dehydrogenase, found in Pseudomonas fluorescens (strain SBW25).